The sequence spans 378 residues: ATP phosphoribosyltransferase regulatory subunit (378 aa).

Belongs to the class-II aminoacyl-tRNA synthetase family. HisZ subfamily. Heteromultimer composed of HisG and HisZ subunits.

Its subcellular location is the cytoplasm. It participates in amino-acid biosynthesis; L-histidine biosynthesis; L-histidine from 5-phospho-alpha-D-ribose 1-diphosphate: step 1/9. Functionally, required for the first step of histidine biosynthesis. May allow the feedback regulation of ATP phosphoribosyltransferase activity by histidine. The sequence is that of ATP phosphoribosyltransferase regulatory subunit from Brucella abortus (strain 2308).